The sequence spans 217 residues: Protein DJ-1alpha (217 aa).

C133 serves as the catalytic Nucleophile. Residue C133 is modified to Cysteine sulfinic acid (-SO2H); alternate.

Expressed in testis (at protein level).

The protein resides in the cytoplasm. The protein localises to the nucleus. Its subcellular location is the mitochondrion. Functionally, plays an important role in cell protection against oxidative stress and cell death acting as oxidative stress sensor. Does not play a role in methylglyoxal detoxification. The protein is Protein DJ-1alpha of Drosophila melanogaster (Fruit fly).